The primary structure comprises 437 residues: Purple acid phosphatase 21 (437 aa).

The signal sequence occupies residues Met1–Ala25. The N-linked (GlcNAc...) asparagine glycan is linked to Asn30. Asp152, Asp179, and Tyr182 together coordinate Fe cation. Zn(2+) is bound at residue Asp179. Residues Asn212 and His296 each coordinate Zn(2+). Residue Asn212 coordinates substrate. His306 (proton donor) is an active-site residue. Zn(2+) is bound at residue His333. A substrate-binding site is contributed by His333–His335. His335 contacts Fe cation.

This sequence belongs to the metallophosphoesterase superfamily. Purple acid phosphatase family. In terms of assembly, homodimer. The cofactor is Fe cation. Requires Zn(2+) as cofactor. As to expression, expressed flowers and siliques.

Its subcellular location is the secreted. The catalysed reaction is a phosphate monoester + H2O = an alcohol + phosphate. The sequence is that of Purple acid phosphatase 21 (PAP21) from Arabidopsis thaliana (Mouse-ear cress).